A 441-amino-acid polypeptide reads, in one-letter code: Velvet complex subunit B (441 aa).

Composition is skewed to polar residues over residues 1–14 (MNPG…QPGH) and 60–75 (MMQQ…STTE). A disordered region spans residues 1–104 (MNPGYSSTAS…QPHVGEQDGR (104 aa)). One can recognise a Velvet domain in the interval 100–426 (EQDGRKYRLD…AGQGIKIPIR (327 aa)).

This sequence belongs to the velvet family. VelB subfamily. In terms of assembly, component of the heterotrimeric velvet complex composed of LAEA, VEA and VELB; VEA acting as a bridging protein between LAEA and VELB. Forms a heterodimeric complex with VOSA; the formation of the VELB-VOSA complex is light-dependent.

The protein localises to the nucleus. It localises to the cytoplasm. Component of the velvet transcription factor complex that controls sexual/asexual developmental ratio in response to light, promoting sexual development in the darkness while stimulating asexual sporulation under illumination. The velvet complex acts as a global regulator for secondary metabolite gene expression. Component of the VELB-VOSA heterodimeric complex that plays a dual role in activating genes associated with spore maturation and repressing certain development-associated genes. The VELB-VOSA complex binds DNA through the DNA-binding domain of VOSA that recognizes an 11-nucleotide consensus sequence 5'-CTGGCCGCGGC-3' consisting of two motifs in the promoters of key developmental regulatory genes. Involved in the regulation of the response to eactive oxygen species (ROS) stress. This chain is Velvet complex subunit B, found in Pyricularia oryzae (strain 70-15 / ATCC MYA-4617 / FGSC 8958) (Rice blast fungus).